We begin with the raw amino-acid sequence, 163 residues long: ATP synthase subunit b', chloroplastic (163 aa).

A helical membrane pass occupies residues 26–46; the sequence is ATLPLMAVQILLFMVILNAVF.

It belongs to the ATPase B chain family. As to quaternary structure, F-type ATPases have 2 components, F(1) - the catalytic core - and F(0) - the membrane proton channel. F(1) has five subunits: alpha(3), beta(3), gamma(1), delta(1), epsilon(1). F(0) has four main subunits: a(1), b(1), b'(1) and c(10-14). The alpha and beta chains form an alternating ring which encloses part of the gamma chain. F(1) is attached to F(0) by a central stalk formed by the gamma and epsilon chains, while a peripheral stalk is formed by the delta, b and b' chains.

The protein resides in the plastid. The protein localises to the chloroplast thylakoid membrane. Its function is as follows. F(1)F(0) ATP synthase produces ATP from ADP in the presence of a proton or sodium gradient. F-type ATPases consist of two structural domains, F(1) containing the extramembraneous catalytic core and F(0) containing the membrane proton channel, linked together by a central stalk and a peripheral stalk. During catalysis, ATP synthesis in the catalytic domain of F(1) is coupled via a rotary mechanism of the central stalk subunits to proton translocation. In terms of biological role, component of the F(0) channel, it forms part of the peripheral stalk, linking F(1) to F(0). The b'-subunit is a diverged and duplicated form of b found in plants and photosynthetic bacteria. The polypeptide is ATP synthase subunit b', chloroplastic (Guillardia theta (Cryptophyte)).